Here is a 381-residue protein sequence, read N- to C-terminus: uncharacterized protein (381 aa).

A helical membrane pass occupies residues 3 to 23; it reads GAVAGLVFLAVLVIFAIIVVA.

It belongs to the band 7/mec-2 family.

The protein resides in the membrane. This is an uncharacterized protein from Mycobacterium bovis (strain ATCC BAA-935 / AF2122/97).